A 170-amino-acid polypeptide reads, in one-letter code: MLKKWLAGILLIMLVGYTGWNLYQTYSKKEVGIQEGQQAPDFSLKTLSGEKSSLQDAKGKKVLLNFWATWCKPCRQEMPAMEKLQKEYADKLAVVAVNFTSAEKSEKQVRAFADTYDLTFPILIDKKGINADYNVMSYPTTYILDEKGVIQDIHVGTMTKKEMEQKLDLD.

Residues 5-23 (WLAGILLIMLVGYTGWNLY) traverse the membrane as a helical segment. Residues 33–170 (IQEGQQAPDF…KEMEQKLDLD (138 aa)) enclose the Thioredoxin domain. The cysteines at positions 71 and 74 are disulfide-linked.

The protein belongs to the thioredoxin family.

It is found in the cell membrane. This is Thioredoxin-like protein YneN (yneN) from Bacillus subtilis (strain 168).